The primary structure comprises 245 residues: Leucyl/phenylalanyl-tRNA--protein transferase (245 aa).

It belongs to the L/F-transferase family.

It is found in the cytoplasm. It catalyses the reaction N-terminal L-lysyl-[protein] + L-leucyl-tRNA(Leu) = N-terminal L-leucyl-L-lysyl-[protein] + tRNA(Leu) + H(+). It carries out the reaction N-terminal L-arginyl-[protein] + L-leucyl-tRNA(Leu) = N-terminal L-leucyl-L-arginyl-[protein] + tRNA(Leu) + H(+). The catalysed reaction is L-phenylalanyl-tRNA(Phe) + an N-terminal L-alpha-aminoacyl-[protein] = an N-terminal L-phenylalanyl-L-alpha-aminoacyl-[protein] + tRNA(Phe). Its function is as follows. Functions in the N-end rule pathway of protein degradation where it conjugates Leu, Phe and, less efficiently, Met from aminoacyl-tRNAs to the N-termini of proteins containing an N-terminal arginine or lysine. In Paraburkholderia phytofirmans (strain DSM 17436 / LMG 22146 / PsJN) (Burkholderia phytofirmans), this protein is Leucyl/phenylalanyl-tRNA--protein transferase.